The sequence spans 629 residues: Tudor and KH domain-containing protein homolog (629 aa).

The helical transmembrane segment at 9 to 29 threads the bilayer; sequence LPIALGLSLVTVTAFVAYYVL. KH domains lie at 46–109 and 119–185; these read INTI…ETLI and IMSE…KKLV. Positions 198-240 are disordered; the sequence is IEQSKRPPRHSSSPPSPCPSPGDRDADADAQGDVDHTRVKYKR. The segment covering 219-240 has biased composition (basic and acidic residues); it reads GDRDADADAQGDVDHTRVKYKR. The Tudor domain maps to 297-362; sequence HVSVGQVVAA…CELRADLLRL (66 aa). The segment at 464–526 is disordered; it reads PAPSPRPSPP…GDDSKDKDGI (63 aa).

It belongs to the Tdrkh family. As to quaternary structure, interacts with (symmetrically methylated) Siwi. Interacts with (symmetrically methylated) Ago3. Interacts with PNLDC1/trimmer; interaction takes place on the mitochondrial surface and recruits PNLDC1/trimmer to Siwi-bound pre-piRNAs.

It is found in the mitochondrion outer membrane. Participates in the primary piRNA biogenesis pathway and is required during spermatogenesis to repress transposable elements and prevent their mobilization, which is essential for the germline integrity. The piRNA metabolic process mediates the repression of transposable elements during meiosis by forming complexes composed of piRNAs and Piwi proteins (Siwi or Ago3) and govern the methylation and subsequent repression of transposons. Required for the final steps of primary piRNA biogenesis by participating in the processing of 31-37 nt intermediates into mature piRNAs: acts by recruiting the exonuclease PNLDC1/trimmer to Siwi-bound pre-piRNAs. In Bombyx mori (Silk moth), this protein is Tudor and KH domain-containing protein homolog.